A 429-amino-acid chain; its full sequence is ATP-dependent RNA helicase RhlB (429 aa).

The Q motif motif lies at 9-37 (EKFAQMGLEPEVLAGLESKGFHYCTPIQA). Residues 40-219 (LPLLVEGHDL…YEHMNHPEHV (180 aa)) enclose the Helicase ATP-binding domain. 53–60 (AQTGTGKT) lines the ATP pocket. A DEAD box motif is present at residues 165–168 (DEAD). The 148-residue stretch at 243–390 (KMLLLLSLME…VSKYDREALL (148 aa)) folds into the Helicase C-terminal domain. The disordered stretch occupies residues 395–429 (APKRVVRNRQPVNRNMRDRQGGGNSNNRRRPPRKS).

It belongs to the DEAD box helicase family. RhlB subfamily. Component of the RNA degradosome, which is a multiprotein complex involved in RNA processing and mRNA degradation.

Its subcellular location is the cytoplasm. It carries out the reaction ATP + H2O = ADP + phosphate + H(+). In terms of biological role, DEAD-box RNA helicase involved in RNA degradation. Has RNA-dependent ATPase activity and unwinds double-stranded RNA. This chain is ATP-dependent RNA helicase RhlB, found in Aeromonas salmonicida (strain A449).